The primary structure comprises 43 residues: Ferritin light chain (43 aa).

Positions 1–43 (MEAALLVEKNLNQALLDLHGLASARGDPHICDFLENHFLDEEV) constitute a Ferritin-like diiron domain.

The protein belongs to the ferritin family. Oligomer of 24 subunits. There are two types of subunits: L (light) chain and H (heavy) chain. The major chain can be light or heavy, depending on the species and tissue type. The functional molecule forms a roughly spherical shell with a diameter of 12 nm and contains a central cavity into which the insoluble mineral iron core is deposited. Interacts with NCOA4.

The protein localises to the cytoplasmic vesicle. It is found in the autophagosome. The protein resides in the cytoplasm. It localises to the autolysosome. In terms of biological role, stores iron in a soluble, non-toxic, readily available form. Important for iron homeostasis. Iron is taken up in the ferrous form and deposited as ferric hydroxides after oxidation. Also plays a role in delivery of iron to cells. Mediates iron uptake in capsule cells of the developing kidney. Delivery to lysosomes by the cargo receptor NCOA4 for autophagic degradation and release or iron. In Ovis aries (Sheep), this protein is Ferritin light chain (FTL).